The following is an 83-amino-acid chain: MRLFLSLPVLVVVLSMVLEGPAPAQGAPEVSNPFDGLEELGKTLEDNTQELINRITQSELPAKMWDWFSETFRKVKEKLKIDS.

Residues 1 to 26 form the signal peptide; that stretch reads MRLFLSLPVLVVVLSMVLEGPAPAQG.

Belongs to the apolipoprotein C1 family.

The protein resides in the secreted. The sequence is that of Apolipoprotein C-I, acidic form (APOC1A) from Gorilla gorilla gorilla (Western lowland gorilla).